Consider the following 158-residue polypeptide: Transcription elongation factor GreA (158 aa).

This sequence belongs to the GreA/GreB family.

Its function is as follows. Necessary for efficient RNA polymerase transcription elongation past template-encoded arresting sites. The arresting sites in DNA have the property of trapping a certain fraction of elongating RNA polymerases that pass through, resulting in locked ternary complexes. Cleavage of the nascent transcript by cleavage factors such as GreA or GreB allows the resumption of elongation from the new 3'terminus. GreA releases sequences of 2 to 3 nucleotides. The protein is Transcription elongation factor GreA of Methylobacterium sp. (strain 4-46).